Here is a 344-residue protein sequence, read N- to C-terminus: GTPase Obg (344 aa).

A compositionally biased stretch (polar residues) spans 1–12 (MFVDSASFSVSS). Residues 1-36 (MFVDSASFSVSSGKGGPGCASFRREKHVPLGGPDGG) form a disordered region. Positions 1–158 (MFVDSASFSV…RNIRLELKLI (158 aa)) constitute an Obg domain. The OBG-type G domain occupies 159–341 (ADVGLVGFPN…LKFGLLEILK (183 aa)). GTP is bound by residues 165–172 (GFPNVGKS), 190–194 (FTTLT), 212–215 (DIPG), 280–283 (TRLD), and 322–324 (SSV). Mg(2+) is bound by residues Ser-172 and Thr-192.

It belongs to the TRAFAC class OBG-HflX-like GTPase superfamily. OBG GTPase family. In terms of assembly, monomer. It depends on Mg(2+) as a cofactor.

Its subcellular location is the cytoplasm. An essential GTPase which binds GTP, GDP and possibly (p)ppGpp with moderate affinity, with high nucleotide exchange rates and a fairly low GTP hydrolysis rate. Plays a role in control of the cell cycle, stress response, ribosome biogenesis and in those bacteria that undergo differentiation, in morphogenesis control. In Campylobacter fetus subsp. fetus (strain 82-40), this protein is GTPase Obg.